Here is a 239-residue protein sequence, read N- to C-terminus: Type II restriction enzyme Eco47II (239 aa).

The enzyme catalyses Endonucleolytic cleavage of DNA to give specific double-stranded fragments with terminal 5'-phosphates.. A P subtype restriction enzyme that recognizes the double-stranded sequence 5'-GGNCC-3'; the cleavage site is unknown. In Escherichia coli, this protein is Type II restriction enzyme Eco47II.